A 410-amino-acid polypeptide reads, in one-letter code: Trifunctional NAD biosynthesis/regulator protein NadR (410 aa).

Residues 7-62 (LKTAIKQQGCTLQQVADASGMTKGYLSQLLNAKIKSPSAQKLEALHRFLGLEFPRR) form the HTH cro/C1-type domain. The H-T-H motif DNA-binding region spans 18–37 (LQQVADASGMTKGYLSQLLN). Positions 63–229 (QKNIGVVFGK…EYIPTEVKPF (167 aa)) are nicotinamide mononucleotide adenylyltransferase. NAD(+) is bound by residues 70 to 73 (FGKF), His-77, Arg-104, 144 to 157 (EEGM…WDVW), 177 to 179 (TSE), 204 to 206 (MNI), 259 to 261 (SAW), and 294 to 297 (YIDF). The segment at 230–410 (FVRTVAILGG…LVKEMMGEQG (181 aa)) is ribosylnicotinamide kinase.

It in the central section; belongs to the bacterial NMN adenylyltransferase family. The protein in the C-terminal section; belongs to the bacterial RNK family. As to quaternary structure, homotetramer.

The protein resides in the cell membrane. The protein localises to the cytoplasm. The catalysed reaction is beta-nicotinamide D-ribonucleotide + ATP + H(+) = diphosphate + NAD(+). It catalyses the reaction beta-nicotinamide D-riboside + ATP = beta-nicotinamide D-ribonucleotide + ADP + H(+). The protein operates within cofactor biosynthesis; NAD(+) biosynthesis [regulation]. Its pathway is cofactor biosynthesis; NAD(+) biosynthesis; NAD(+) from nicotinamide D-ribonucleotide: step 1/1. Feed-back regulated by NAD. A high level of NAD causes NadR to lose enzymatic activity and repress several NAD synthetic genes; conversely, a low NAD level activates the assimilatory enzymatic activities and leads to derepression of biosynthetic genes. Functionally, this enzyme has three activities: DNA binding, nicotinamide mononucleotide (NMN) adenylyltransferase and ribosylnicotinamide (RN) kinase. The DNA-binding domain binds to the nadB operator sequence in an NAD- and ATP-dependent manner. As NAD levels increase within the cell, the affinity of NadR for the nadB operator regions of nadA, nadB, and pncB increases, repressing the transcription of these genes. The RN kinase activity catalyzes the phosphorylation of RN to form nicotinamide ribonucleotide. The NMN adenylyltransferase activity catalyzes the transfer of the AMP moiety of ATP to nicotinamide ribonucleotide to form NAD(+). The NMN adenylyltransferase domain also functions as the NAD and ATP sensor. The sequence is that of Trifunctional NAD biosynthesis/regulator protein NadR (nadR) from Salmonella typhimurium (strain LT2 / SGSC1412 / ATCC 700720).